Consider the following 475-residue polypeptide: Sulfate adenylyltransferase subunit 1 (475 aa).

The 215-residue stretch at Lys-25–Arg-239 folds into the tr-type G domain. Positions Gly-34 to Ser-41 are G1. Gly-34 to Ser-41 contacts GTP. The segment at Gly-92–Asp-96 is G2. The tract at residues Asp-113 to Gly-116 is G3. GTP-binding positions include Asp-113–His-117 and Asn-168–Asp-171. A G4 region spans residues Asn-168–Asp-171. The G5 stretch occupies residues Ser-206–Leu-208.

This sequence belongs to the TRAFAC class translation factor GTPase superfamily. Classic translation factor GTPase family. CysN/NodQ subfamily. As to quaternary structure, heterodimer composed of CysD, the smaller subunit, and CysN.

It carries out the reaction sulfate + ATP + H(+) = adenosine 5'-phosphosulfate + diphosphate. The protein operates within sulfur metabolism; hydrogen sulfide biosynthesis; sulfite from sulfate: step 1/3. In terms of biological role, with CysD forms the ATP sulfurylase (ATPS) that catalyzes the adenylation of sulfate producing adenosine 5'-phosphosulfate (APS) and diphosphate, the first enzymatic step in sulfur assimilation pathway. APS synthesis involves the formation of a high-energy phosphoric-sulfuric acid anhydride bond driven by GTP hydrolysis by CysN coupled to ATP hydrolysis by CysD. The polypeptide is Sulfate adenylyltransferase subunit 1 (Escherichia fergusonii (strain ATCC 35469 / DSM 13698 / CCUG 18766 / IAM 14443 / JCM 21226 / LMG 7866 / NBRC 102419 / NCTC 12128 / CDC 0568-73)).